The following is a 338-amino-acid chain: Anthranilate phosphoribosyltransferase (338 aa).

5-phospho-alpha-D-ribose 1-diphosphate is bound by residues Gly-78, 81 to 82, Ser-86, 88 to 91, 106 to 114, and Ser-118; these read GD, NIST, and KHGNKSVTS. Gly-78 contributes to the anthranilate binding site. Ser-90 is a binding site for Mg(2+). Anthranilate is bound at residue Asn-109. An anthranilate-binding site is contributed by Arg-163. Residues Asp-222 and Glu-223 each coordinate Mg(2+).

It belongs to the anthranilate phosphoribosyltransferase family. In terms of assembly, homodimer. It depends on Mg(2+) as a cofactor.

It carries out the reaction N-(5-phospho-beta-D-ribosyl)anthranilate + diphosphate = 5-phospho-alpha-D-ribose 1-diphosphate + anthranilate. It participates in amino-acid biosynthesis; L-tryptophan biosynthesis; L-tryptophan from chorismate: step 2/5. Functionally, catalyzes the transfer of the phosphoribosyl group of 5-phosphorylribose-1-pyrophosphate (PRPP) to anthranilate to yield N-(5'-phosphoribosyl)-anthranilate (PRA). The protein is Anthranilate phosphoribosyltransferase of Staphylococcus saprophyticus subsp. saprophyticus (strain ATCC 15305 / DSM 20229 / NCIMB 8711 / NCTC 7292 / S-41).